The following is a 616-amino-acid chain: Male-specific lethal 1 homolog (616 aa).

The segment at 1–116 is disordered; that stretch reads MTMRSAVFKA…PPATKQAGIG (116 aa). Serine 66 bears the Phosphoserine mark. The segment covering 81–91 has biased composition (low complexity); the sequence is GLLLPAGAAPG. The residue at position 127 (serine 127) is a Phosphoserine. The disordered stretch occupies residues 152-218; the sequence is TPWAGDKGGA…LGGGGGSGAS (67 aa). The span at 153–171 shows a compositional bias: low complexity; that stretch reads PWAGDKGGAAPPAATASDP. Positions 172 to 186 are enriched in pro residues; it reads AGPPPLPLPGPPPLA. Positions 187-196 are enriched in low complexity; the sequence is PTATAGTLAA. Serine 207 is subject to Phosphoserine. Residues 215–284 are a coiled coil; it reads SGASSQAACL…RDNEKERHKL (70 aa). An interaction with MSL2 region spans residues 225 to 239; the sequence is KQILLLQLDLIEQQQ. Lysine 303 participates in a covalent cross-link: Glycyl lysine isopeptide (Lys-Gly) (interchain with G-Cter in SUMO2). The disordered stretch occupies residues 306 to 422; it reads RQPELCETSQ…PKEKAFSSEM (117 aa). The Nuclear localization signal motif lies at 319–348; that stretch reads SKPFSCGRSGKGHKRKTPFGNTERKTPVKK. At lysine 355 the chain carries N6-acetyllysine. Threonine 358 and threonine 360 each carry phosphothreonine. Serine 364 carries the post-translational modification Phosphoserine. Residues lysine 367 and lysine 380 each participate in a glycyl lysine isopeptide (Lys-Gly) (interchain with G-Cter in SUMO2) cross-link. The span at 378 to 394 shows a compositional bias: basic and acidic residues; the sequence is VCKRELRSQETPEKPRS. Serine 385 carries the phosphoserine modification. Residue threonine 388 is modified to Phosphothreonine. Serine 395 is modified (phosphoserine). Residues 395–409 show a composition bias toward polar residues; sequence SVDTPPRLSTPQKGP. Phosphothreonine occurs at positions 398 and 404. Phosphoserine occurs at positions 444, 452, and 484. In terms of domain architecture, PEHE spans 474–593; sequence VLAVPSWRDH…LAPQNFELPW (120 aa). Residues 498 to 516 form an interaction with KAT8 HAT domain region; that stretch reads ENLDDSVFSKRHAKLELDE. A Bipartite nuclear localization signal motif is present at residues 507-521; sequence KRHAKLELDEKRRKR. An interaction with MSL3 MRG domain region spans residues 552–593; that stretch reads EVTSFFPEPDDVESLLITPFLPVVAFGRPLPKLAPQNFELPW.

The protein belongs to the msl-1 family. Component of a multisubunit histone acetyltransferase complex (MSL) at least composed of the KAT8/MOF/MYST1, MSL1/hampin, MSL2 and MSL3. Interacts (via PEHE domain) with KAT8 (via HAT domain) and MSL3 (via MRG domain); both interactions are direct. Directly interacts with MSL2 via its coiled coil domain. Directly interacts with NUPR1. Interacts with TP53BP1; this interaction may be required for MSL1 DNA repair activity, but not for histone acetyltransferase activity. Forms a MSL heterotetrameric core with MSL2. Isoform 1 and isoform 3 interact with TTC4. Isoform 1 interacts with ECM2 and PIHD1. Sumoylated with SUMO1. Isoform 3 and isoform 5 are testis-specific. Isoform 1 and isoform 4 are ubiquitously expressed. Isoform 2 is expressed at low levels in the testis and brain.

The protein resides in the nucleus. It is found in the nucleus speckle. It localises to the nucleoplasm. Non-catalytic component of the MSL histone acetyltransferase complex, a multiprotein complex that mediates the majority of histone H4 acetylation at 'Lys-16' (H4K16ac), an epigenetic mark that prevents chromatin compaction. The MSL complex is required for chromosome stability and genome integrity by maintaining homeostatic levels of H4K16ac. The MSL complex is also involved in gene dosage by promoting up-regulation of genes expressed by the X chromosome. X up-regulation is required to compensate for autosomal biallelic expression. The MSL complex also participates in gene dosage compensation by promoting expression of Tsix non-coding RNA. Within the MSL complex, acts as a scaffold to tether MSL3 and KAT8 together for enzymatic activity regulation. Greatly enhances MSL2 E3 ubiquitin ligase activity, promoting monoubiquitination of histone H2B at 'Lys-34' (H2BK34Ub). This modification in turn stimulates histone H3 methylation at 'Lys-4' (H3K4me) and 'Lys-79' (H3K79me) and leads to gene activation, including that of HOXA9 and MEIS1. This Mus musculus (Mouse) protein is Male-specific lethal 1 homolog.